We begin with the raw amino-acid sequence, 451 residues long: L-seryl-tRNA(Sec) selenium transferase (451 aa).

The residue at position 286 (lysine 286) is an N6-(pyridoxal phosphate)lysine.

The protein belongs to the SelA family. It depends on pyridoxal 5'-phosphate as a cofactor.

The protein resides in the cytoplasm. It catalyses the reaction L-seryl-tRNA(Sec) + selenophosphate + H(+) = L-selenocysteinyl-tRNA(Sec) + phosphate. It functions in the pathway aminoacyl-tRNA biosynthesis; selenocysteinyl-tRNA(Sec) biosynthesis; selenocysteinyl-tRNA(Sec) from L-seryl-tRNA(Sec) (bacterial route): step 1/1. Its function is as follows. Converts seryl-tRNA(Sec) to selenocysteinyl-tRNA(Sec) required for selenoprotein biosynthesis. The chain is L-seryl-tRNA(Sec) selenium transferase from Aliarcobacter butzleri (strain RM4018) (Arcobacter butzleri).